A 306-amino-acid polypeptide reads, in one-letter code: Agmatinase (306 aa).

Positions 126, 149, 151, 153, 230, and 232 each coordinate Mn(2+).

It belongs to the arginase family. Agmatinase subfamily. It depends on Mn(2+) as a cofactor.

The enzyme catalyses agmatine + H2O = urea + putrescine. It functions in the pathway amine and polyamine biosynthesis; putrescine biosynthesis via agmatine pathway; putrescine from agmatine: step 1/1. Its function is as follows. Catalyzes the formation of putrescine from agmatine. This Shigella dysenteriae serotype 1 (strain Sd197) protein is Agmatinase.